Here is a 112-residue protein sequence, read N- to C-terminus: Gonad-inhibiting hormone (112 aa).

The first 31 residues, 1-31 (MVTRVGSGFSVQRVWLLLVIVVVLCGSVTQQ), serve as a signal peptide directing secretion. Disulfide bonds link cysteine 41/cysteine 78, cysteine 58/cysteine 74, and cysteine 61/cysteine 87. At alanine 109 the chain carries Alanine amide.

Produced in the eyestalk X-organ sinus gland complex of male and female lobsters.

It localises to the secreted. In terms of biological role, inhibits vitellogenesis in female animals. Plays a prominent role in the regulation of reproduction/molting processes. The sequence is that of Gonad-inhibiting hormone from Homarus americanus (American lobster).